A 946-amino-acid polypeptide reads, in one-letter code: Protein translocase subunit SecA (946 aa).

ATP is bound by residues glutamine 87, 105 to 109 (GEGKT), and aspartate 524. Residues 904–933 (PAQTTDKADRDPNKPETWGKVGRNEDCPCG) form a disordered region. Positions 930, 932, 941, and 942 each coordinate Zn(2+).

Belongs to the SecA family. As to quaternary structure, monomer and homodimer. Part of the essential Sec protein translocation apparatus which comprises SecA, SecYEG and auxiliary proteins SecDF-YajC and YidC. The cofactor is Zn(2+).

The protein resides in the cell inner membrane. It localises to the cytoplasm. It catalyses the reaction ATP + H2O + cellular proteinSide 1 = ADP + phosphate + cellular proteinSide 2.. Functionally, part of the Sec protein translocase complex. Interacts with the SecYEG preprotein conducting channel. Has a central role in coupling the hydrolysis of ATP to the transfer of proteins into and across the cell membrane, serving both as a receptor for the preprotein-SecB complex and as an ATP-driven molecular motor driving the stepwise translocation of polypeptide chains across the membrane. This chain is Protein translocase subunit SecA, found in Rhodopseudomonas palustris (strain TIE-1).